A 489-amino-acid chain; its full sequence is Betaine aldehyde dehydrogenase (489 aa).

Residues Thr26 and Asp93 each contribute to the K(+) site. An NAD(+)-binding site is contributed by 150–152 (GAW). The active-site Charge relay system is Lys162. NAD(+) is bound at residue 176–179 (KPSE). Residue Val180 participates in K(+) binding. 229–232 (GVET) lines the NAD(+) pocket. Leu245 contacts K(+). Glu251 acts as the Proton acceptor in catalysis. Positions 253, 285, and 386 each coordinate NAD(+). Residue Cys285 is the Nucleophile of the active site. Residue Cys285 is modified to Cysteine sulfenic acid (-SOH). The K(+) site is built by Lys456 and Gly459. Glu463 serves as the catalytic Charge relay system.

The protein belongs to the aldehyde dehydrogenase family. As to quaternary structure, dimer of dimers. The cofactor is K(+).

It catalyses the reaction betaine aldehyde + NAD(+) + H2O = glycine betaine + NADH + 2 H(+). It participates in amine and polyamine biosynthesis; betaine biosynthesis via choline pathway; betaine from betaine aldehyde: step 1/1. In terms of biological role, involved in the biosynthesis of the osmoprotectant glycine betaine. Catalyzes the irreversible oxidation of betaine aldehyde to the corresponding acid. The protein is Betaine aldehyde dehydrogenase of Burkholderia vietnamiensis (strain G4 / LMG 22486) (Burkholderia cepacia (strain R1808)).